The chain runs to 118 residues: Large ribosomal subunit protein uL18 (118 aa).

The protein belongs to the universal ribosomal protein uL18 family. As to quaternary structure, part of the 50S ribosomal subunit; part of the 5S rRNA/L5/L18/L25 subcomplex. Contacts the 5S and 23S rRNAs.

Functionally, this is one of the proteins that bind and probably mediate the attachment of the 5S RNA into the large ribosomal subunit, where it forms part of the central protuberance. The chain is Large ribosomal subunit protein uL18 from Brachyspira hyodysenteriae (strain ATCC 49526 / WA1).